We begin with the raw amino-acid sequence, 835 residues long: Microcephalin (835 aa).

In terms of domain architecture, BRCT 1 spans 1 to 93 (MAAPILKDVV…AHIDESLFPA (93 aa)). Residues 184–206 (KEKRENLSPTSSQLIQQSHDNPS) form a disordered region. Residues 190-206 (LSPTSSQLIQQSHDNPS) show a composition bias toward polar residues. Serine 279, serine 287, serine 296, and serine 333 each carry phosphoserine. The residue at position 335 (threonine 335) is a Phosphothreonine. Basic residues predominate over residues 346-361 (HSRPRSSSVKRKRVSH). 2 disordered regions span residues 346–376 (HSRPRSSSVKRKRVSHGSHSPPKEKCKRKRS) and 418–442 (PDNLKERNSENLPPESQLPSSPAQF). Serine 548 carries the phosphoserine modification. The segment at 557 to 582 (GLKSTQNRGTTSKISNSSEGEAQSEH) is disordered. Polar residues predominate over residues 559–577 (KSTQNRGTTSKISNSSEGE). 2 consecutive BRCT domains span residues 640-730 (SGRG…PFEL) and 751-833 (YRGT…NYLL).

As to quaternary structure, interacts with CDC27 and maybe other components of the APC/C complex. Interacts with histone variant H2AX under DNA damage conditions.

It is found in the cytoplasm. Its subcellular location is the cytoskeleton. The protein localises to the microtubule organizing center. The protein resides in the centrosome. Implicated in chromosome condensation and DNA damage induced cellular responses. May play a role in neurogenesis and regulation of the size of the cerebral cortex. The sequence is that of Microcephalin from Gorilla gorilla gorilla (Western lowland gorilla).